The following is a 302-amino-acid chain: MPRLGLILNDGKELALKAALSIESKLEKSGYEVVRVSSSGGMVGFANPDQHMRTLGYNACVPEGFDPSMKLAIVLGGDGTVLSAARQTAPVGVPILTINTGHLGFLSEAYLPDIDKALEQVLASQWEIEERTSLVVSVMRGEQRRWEALCLNEMALHREPLTSMCHFEISIGRHAPVDISADGVILSTPTGSTAYSLSAGGPVITPDCPVLQLTPIAPHSLASRALVFSDLEPVTVFPATPERLMMVVDGTAGCYVWPEDRVLIRKSNHPVRFIRLTDHEFFQVLRKKLGWGLPHVAKPEKY.

Residue Asp78 is the Proton acceptor of the active site. Residues 78–79 (DG), 152–153 (NE), Asp182, 193–198 (TAYSLS), and Ala217 contribute to the NAD(+) site.

It belongs to the NAD kinase family. A divalent metal cation serves as cofactor.

The protein localises to the cytoplasm. It carries out the reaction NAD(+) + ATP = ADP + NADP(+) + H(+). In terms of biological role, involved in the regulation of the intracellular balance of NAD and NADP, and is a key enzyme in the biosynthesis of NADP. Catalyzes specifically the phosphorylation on 2'-hydroxyl of the adenosine moiety of NAD to yield NADP. This is NAD kinase 2 from Prochlorococcus marinus (strain SARG / CCMP1375 / SS120).